The sequence spans 183 residues: Peptide deformylase (183 aa).

Fe cation contacts are provided by cysteine 110 and histidine 153. Glutamate 154 is a catalytic residue. Position 157 (histidine 157) interacts with Fe cation.

Belongs to the polypeptide deformylase family. The cofactor is Fe(2+).

The enzyme catalyses N-terminal N-formyl-L-methionyl-[peptide] + H2O = N-terminal L-methionyl-[peptide] + formate. Functionally, removes the formyl group from the N-terminal Met of newly synthesized proteins. Requires at least a dipeptide for an efficient rate of reaction. N-terminal L-methionine is a prerequisite for activity but the enzyme has broad specificity at other positions. The protein is Peptide deformylase of Shouchella clausii (strain KSM-K16) (Alkalihalobacillus clausii).